The sequence spans 425 residues: NAD kinase 2, mitochondrial (425 aa).

The N-terminal 45 residues, 1 to 45 (MDTSAIQQTLVKIYQRQAWQPPRKASKNETTVGKPRELAGGGSPA), are a transit peptide targeting the mitochondrion. The disordered stretch occupies residues 20-46 (QPPRKASKNETTVGKPRELAGGGSPAD). An N6-acetyllysine; alternate modification is found at K59. K59 carries the N6-succinyllysine; alternate modification. S171 bears the Phosphoserine mark. An N6-succinyllysine modification is found at K285. N6-acetyllysine; alternate is present on K300. At K300 the chain carries N6-succinyllysine; alternate. The residue at position 350 (S350) is a Phosphoserine. An N6-acetyllysine modification is found at K380.

The protein belongs to the NAD kinase family. As to quaternary structure, homodimer.

It is found in the mitochondrion. It carries out the reaction NAD(+) + ATP = ADP + NADP(+) + H(+). Its activity is regulated as follows. Inhibited by NADH, NADPH and NADP(+). Mitochondrial NAD(+) kinase that phosphorylates NAD(+) to yield NADP(+). Can use both ATP or inorganic polyphosphate as the phosphoryl donor. This is NAD kinase 2, mitochondrial (Nadk2) from Rattus norvegicus (Rat).